We begin with the raw amino-acid sequence, 57 residues long: uncharacterized protein (57 aa).

The helical transmembrane segment at 12-34 threads the bilayer; it reads VIAVLSLFVFAVAVFFVGMALLT.

It localises to the membrane. This is an uncharacterized protein from Pasteurella multocida (strain Pm70).